The chain runs to 832 residues: SID1 transmembrane family member 2 (832 aa).

An N-terminal signal peptide occupies residues 1–15 (MIAWRLPLCVLLVAA). The Extracellular portion of the chain corresponds to 16 to 293 (VESHLGALGP…VSQAVTSEAY (278 aa)). N-linked (GlcNAc...) asparagine glycosylation is found at asparagine 27, asparagine 54, asparagine 60, asparagine 123, asparagine 141, and asparagine 165. The helical transmembrane segment at 294–314 (VGGMLFCLGIFLSFYLLTVLL) threads the bilayer. Topologically, residues 315-447 (ACWENWRQRK…DKRVLRKKYQ (133 aa)) are cytoplasmic. A phosphoserine mark is found at serine 401, serine 403, and serine 404. The helical transmembrane segment at 448 to 468 (IYFWNIATIAVFYALPVVQLV) threads the bilayer. Residues 469–499 (ITYQTVVNVTGNQDICYYNFLCAHPLGNLSA) lie on the Extracellular side of the membrane. Residues asparagine 476 and asparagine 496 are each glycosylated (N-linked (GlcNAc...) asparagine). Residues 500–520 (FNNILSNLGYILLGLLFLLII) form a helical membrane-spanning segment. At 521–546 (LQREINHNRALLRNDLYALECGIPKH) the chain is on the cytoplasmic side. A helical transmembrane segment spans residues 547–567 (FGLFYAMGTALMMEGLLSACY). The Extracellular portion of the chain corresponds to 568-605 (HVCPNYTNFQFDTSFMYMIAGLCMLKLYQKRHPDINAS). N-linked (GlcNAc...) asparagine glycosylation is found at asparagine 572 and asparagine 603. The helical transmembrane segment at 606–626 (AYSAYACLAIVIFFSVLGVVF) threads the bilayer. Residues 627 to 631 (GKGNT) are Cytoplasmic-facing. The helical transmembrane segment at 632–652 (AFWIVFSVIHIISTLLLSTQL) threads the bilayer. Topologically, residues 653-688 (YYMGRWKLDSGIFRRILHVLYTDCIRQCSGPLYTDR) are extracellular. Residues 689 to 709 (MVLLVMGNIINWSLAAYGLIM) traverse the membrane as a helical segment. Over 710–715 (RPNDFA) the chain is Cytoplasmic. The chain crosses the membrane as a helical span at residues 716–736 (SYLLAIGICNLLLYFAFYIIM). The Extracellular segment spans residues 737–746 (KLRSGERIKL). A helical transmembrane segment spans residues 747–767 (IPLLCIVCTSVVWGFALFFFF). Topologically, residues 768 to 796 (QGLSTWQKTPAESREHNRDCILLDFFDDH) are cytoplasmic. Residues 797 to 817 (DIWHFLSSIAMFGSFLVLLTL) form a helical membrane-spanning segment. The Extracellular portion of the chain corresponds to 818–832 (DDDLDTVQRDKIYVF).

Belongs to the SID1 family. Interacts with adapter protein complex 1 (AP-1) and AP-2, but not AP-3 and AP-4. Interacts with LAMP2. In terms of processing, glycosylated. In terms of tissue distribution, highly expressed in the liver, brain, kidney and intestine (at protein level).

It is found in the lysosome membrane. The protein resides in the cell membrane. Its function is as follows. Mediates the translocation of RNA and DNA across the lysosomal membrane during RNA and DNA autophagy (RDA), a process in which RNA or DNA is directly imported into lysosomes in an ATP-dependent manner, and degraded. Involved in the uptake of single-stranded oligonucleotides by living cells, a process called gymnosis. In vitro, mediates the uptake of linear DNA more efficiently than that of circular DNA, but exhibits similar uptake efficacy toward RNA and DNA. Binds long double-stranded RNA (dsRNA) (500 - 700 base pairs), but not dsRNA shorter than 100 bp. The protein is SID1 transmembrane family member 2 (Sidt2) of Rattus norvegicus (Rat).